A 160-amino-acid polypeptide reads, in one-letter code: Endoribonuclease YbeY (160 aa).

3 residues coordinate Zn(2+): His112, His116, and His122. Residues 141 to 160 (ELGHPDPYACDDEEPPSKEK) form a disordered region.

This sequence belongs to the endoribonuclease YbeY family. Zn(2+) is required as a cofactor.

The protein localises to the cytoplasm. Functionally, single strand-specific metallo-endoribonuclease involved in late-stage 70S ribosome quality control and in maturation of the 3' terminus of the 16S rRNA. This is Endoribonuclease YbeY from Pseudomonas aeruginosa (strain UCBPP-PA14).